We begin with the raw amino-acid sequence, 199 residues long: Hematopoietic prostaglandin D synthase (199 aa).

A GST N-terminal domain is found at 2-79 (PNYKLLYFNM…YLTKNTDLAG (78 aa)). Residues Tyr-8, Arg-14, Trp-39, 49–51 (GKI), and 63–64 (QS) each bind glutathione. The GST C-terminal domain maps to 81-199 (TALEQCQADA…WILKRPQTKL (119 aa)).

It belongs to the GST superfamily. Sigma family. As to quaternary structure, homodimer. Glutathione is required as a cofactor. Expressed in skin and oviduct.

It localises to the cytoplasm. It catalyses the reaction prostaglandin H2 = prostaglandin D2. The catalysed reaction is RX + glutathione = an S-substituted glutathione + a halide anion + H(+). The enzyme catalyses 2-glyceryl-prostaglandin H2 = 2-glyceryl-prostaglandin D2. Bifunctional enzyme which catalyzes both the conversion of PGH2 to PGD2, a prostaglandin involved in smooth muscle contraction/relaxation and a potent inhibitor of platelet aggregation, and the conjugation of glutathione with a wide range of aryl halides and organic isothiocyanates. Also exhibits low glutathione-peroxidase activity. This chain is Hematopoietic prostaglandin D synthase, found in Mus musculus (Mouse).